We begin with the raw amino-acid sequence, 391 residues long: Mannose-6-phosphate isomerase (391 aa).

The Zn(2+) site is built by Gln97, His99, Glu134, and His255. The active site involves Arg274. An N6-acetyllysine modification is found at Lys280.

The protein belongs to the mannose-6-phosphate isomerase type 1 family. Zn(2+) is required as a cofactor.

It is found in the cytoplasm. It catalyses the reaction D-mannose 6-phosphate = D-fructose 6-phosphate. Its function is as follows. Involved in the conversion of glucose to GDP-L-fucose, which can be converted to L-fucose, a capsular polysaccharide. In Shigella flexneri, this protein is Mannose-6-phosphate isomerase (manA).